A 372-amino-acid chain; its full sequence is N-methyl-L-tryptophan oxidase (372 aa).

4–34 serves as a coordination point for FAD; the sequence is DLIIIGSGSVGAAAGYYATRAGLKVLMTDAH. Cys-307 bears the S-8alpha-FAD cysteine mark.

This sequence belongs to the MSOX/MTOX family. MTOX subfamily. As to quaternary structure, monomer. It depends on FAD as a cofactor.

The catalysed reaction is N(alpha)-methyl-L-tryptophan + O2 + H2O = L-tryptophan + formaldehyde + H2O2. Functionally, catalyzes the oxidative demethylation of N-methyl-L-tryptophan. This Citrobacter koseri (strain ATCC BAA-895 / CDC 4225-83 / SGSC4696) protein is N-methyl-L-tryptophan oxidase.